The chain runs to 1052 residues: Focal adhesion kinase 1 (1052 aa).

Residues 1-27 (MAAAYLDPNLNHTPNSSTKTHLGTGME) form a disordered region. Ala-2 is modified (N-acetylalanine). Position 5 is a phosphotyrosine (Tyr-5). A compositionally biased stretch (polar residues) spans 10–21 (LNHTPNSSTKTH). A Phosphothreonine modification is found at Thr-13. Ser-29 and Ser-54 each carry phosphoserine. Residues 35–355 (RVLKVFHYFE…GYCRLVNGTS (321 aa)) enclose the FERM domain. A Glycyl lysine isopeptide (Lys-Gly) (interchain with G-Cter in SUMO) cross-link involves residue Lys-152. A Phosphotyrosine; by autocatalysis modification is found at Tyr-397. The residue at position 407 (Tyr-407) is a Phosphotyrosine. The region spanning 422-680 (IELGRCIGEG…ELKAQLSTIL (259 aa)) is the Protein kinase domain. Residues 428 to 434 (IGEGQFG), Lys-454, and 500 to 502 (ELC) contribute to the ATP site. Asp-546 serves as the catalytic Proton acceptor. Phosphotyrosine is present on Tyr-570. Phosphotyrosine; by RET and SRC is present on residues Tyr-576 and Tyr-577. Ser-580 is modified (phosphoserine). Positions 684-697 (KAQQEERMRMESRR) are enriched in basic and acidic residues. 2 disordered regions span residues 684–734 (KAQQ…PSPQ) and 839–922 (LSRG…RSND). The interaction with TGFB1I1 stretch occupies residues 707-1052 (GSDEAPPKPS…LKMLGQTRPH (346 aa)). At Ser-722 the chain carries Phosphoserine. A Phosphoserine; by CDK5 modification is found at Ser-732. The span at 839–849 (LSRGSIDREDG) shows a compositional bias: basic and acidic residues. Phosphoserine is present on Ser-843. Position 861 is a phosphotyrosine (Tyr-861). The span at 869 to 880 (PAAPPKKPPRPG) shows a compositional bias: pro residues. Residues Ser-887 and Ser-910 each carry the phosphoserine modification. The tract at residues 912–1052 (PPTANLDRSN…LKMLGQTRPH (141 aa)) is interaction with ARHGEF28. A Phosphothreonine modification is found at Thr-914. Tyr-925 is modified (phosphotyrosine).

This sequence belongs to the protein kinase superfamily. Tyr protein kinase family. FAK subfamily. As to quaternary structure, interacts (via first Pro-rich region) with CAS family members (via SH3 domain), including BCAR1, BCAR3, and CASS4. Interacts with NEDD9 (via SH3 domain). Interacts with GIT1. Interacts with SORBS1. Interacts with ARHGEF28. Interacts with SHB. Part of a complex composed of THSD1, PTK2/FAK1, TLN1 and VCL. Interacts with PXN and TLN1. Interacts with STAT1. Interacts with DCC. Interacts with WASL. Interacts with ARHGEF7. Interacts with GRB2 and GRB7. Component of a complex that contains at least FER, CTTN and PTK2/FAK1. Interacts with BMX. Interacts with TGFB1I1. Interacts with STEAP4. Interacts with ZFYVE21. Interacts with ESR1. Interacts with PIK3R1 or PIK3R2. Interacts with SRC, FGR, FLT4 and RET. Interacts with EPHA2 in resting cells; activation of EPHA2 recruits PTPN11, leading to dephosphorylation of PTK2/FAK1 and dissociation of the complex. Interacts with EPHA1 (kinase activity-dependent). Interacts with CD4; this interaction requires the presence of HIV-1 gp120. Interacts with PIAS1. Interacts with ARHGAP26 and SHC1. Interacts with RB1CC1; this inhibits PTK2/FAK1 activity and activation of downstream signaling pathways. Interacts with P53/TP53 and MDM2. Interacts with LPXN (via LD motif 3). Interacts with MISP. Interacts with CIB1 isoform 2. Interacts with CD36. Interacts with EMP2; regulates PTK2 activation and localization. Interacts with DSCAM. Interacts with AMBRA1. Interacts (when tyrosine-phosphorylated) with tensin TNS1; the interaction is increased by phosphorylation of TNS1. Post-translationally, phosphorylated on tyrosine residues upon activation, e.g. upon integrin signaling. Tyr-397 is the major autophosphorylation site, but other kinases can also phosphorylate this residue. Phosphorylation at Tyr-397 promotes interaction with SRC and SRC family members, leading to phosphorylation at Tyr-576, Tyr-577 and at additional tyrosine residues. FGR promotes phosphorylation at Tyr-397 and Tyr-576. FER promotes phosphorylation at Tyr-577, Tyr-861 and Tyr-925, even when cells are not adherent. Tyr-397, Tyr-576 and Ser-722 are phosphorylated only when cells are adherent. Phosphorylation at Tyr-397 is important for interaction with BMX, PIK3R1 and SHC1. Phosphorylation at Tyr-925 is important for interaction with GRB2. Dephosphorylated by PTPN11; PTPN11 is recruited to PTK2 via EPHA2 (tyrosine phosphorylated). Microtubule-induced dephosphorylation at Tyr-397 is crucial for the induction of focal adhesion disassembly; this dephosphorylation could be catalyzed by PTPN11 and regulated by ZFYVE21. Phosphorylation on tyrosine residues is enhanced by NTN1. Sumoylated; this enhances autophosphorylation. Detected in B and T-lymphocytes. Isoform 1 and isoform 6 are detected in lung fibroblasts (at protein level). Ubiquitous. Expressed in epithelial cells (at protein level).

It localises to the cell junction. The protein localises to the focal adhesion. The protein resides in the cell membrane. Its subcellular location is the cytoplasm. It is found in the perinuclear region. It localises to the cell cortex. The protein localises to the cytoskeleton. The protein resides in the microtubule organizing center. Its subcellular location is the centrosome. It is found in the nucleus. It localises to the cilium basal body. The catalysed reaction is L-tyrosyl-[protein] + ATP = O-phospho-L-tyrosyl-[protein] + ADP + H(+). Its activity is regulated as follows. Subject to autoinhibition, mediated by interactions between the FERM domain and the kinase domain. Activated by autophosphorylation at Tyr-397. This promotes interaction with SRC and phosphorylation at Tyr-576 and Tyr-577 in the kinase activation loop. Phosphorylation at Tyr-576 and Tyr-577 is required for maximal kinase activity. Inhibited by TAC544, TAE226, PF-573,228 and PF-562,271. Its function is as follows. Non-receptor protein-tyrosine kinase that plays an essential role in regulating cell migration, adhesion, spreading, reorganization of the actin cytoskeleton, formation and disassembly of focal adhesions and cell protrusions, cell cycle progression, cell proliferation and apoptosis. Required for early embryonic development and placenta development. Required for embryonic angiogenesis, normal cardiomyocyte migration and proliferation, and normal heart development. Regulates axon growth and neuronal cell migration, axon branching and synapse formation; required for normal development of the nervous system. Plays a role in osteogenesis and differentiation of osteoblasts. Functions in integrin signal transduction, but also in signaling downstream of numerous growth factor receptors, G-protein coupled receptors (GPCR), EPHA2, netrin receptors and LDL receptors. Forms multisubunit signaling complexes with SRC and SRC family members upon activation; this leads to the phosphorylation of additional tyrosine residues, creating binding sites for scaffold proteins, effectors and substrates. Regulates numerous signaling pathways. Promotes activation of phosphatidylinositol 3-kinase and the AKT1 signaling cascade. Promotes activation of MAPK1/ERK2, MAPK3/ERK1 and the MAP kinase signaling cascade. Promotes localized and transient activation of guanine nucleotide exchange factors (GEFs) and GTPase-activating proteins (GAPs), and thereby modulates the activity of Rho family GTPases. Signaling via CAS family members mediates activation of RAC1. Phosphorylates NEDD9 following integrin stimulation. Recruits the ubiquitin ligase MDM2 to P53/TP53 in the nucleus, and thereby regulates P53/TP53 activity, P53/TP53 ubiquitination and proteasomal degradation. Phosphorylates SRC; this increases SRC kinase activity. Phosphorylates ACTN1, ARHGEF7, GRB7, RET and WASL. Promotes phosphorylation of PXN and STAT1; most likely PXN and STAT1 are phosphorylated by a SRC family kinase that is recruited to autophosphorylated PTK2/FAK1, rather than by PTK2/FAK1 itself. Promotes phosphorylation of BCAR1; GIT2 and SHC1; this requires both SRC and PTK2/FAK1. Promotes phosphorylation of BMX and PIK3R1. Isoform 6 (FRNK) does not contain a kinase domain and inhibits PTK2/FAK1 phosphorylation and signaling. Its enhanced expression can attenuate the nuclear accumulation of LPXN and limit its ability to enhance serum response factor (SRF)-dependent gene transcription. Functionally, isoform 6 (FRNK) does not contain a kinase domain and inhibits PTK2/FAK1 phosphorylation and signaling. Its enhanced expression can attenuate the nuclear accumulation of LPXN and limit its ability to enhance serum response factor (SRF)-dependent gene transcription. The polypeptide is Focal adhesion kinase 1 (Homo sapiens (Human)).